The primary structure comprises 531 residues: Polygalacturonase (531 aa).

Residues 1–23 (MILSHRYTLIALAAAILSSGAHA) form the signal peptide. Catalysis depends on aspartate 307, which acts as the Proton donor. Histidine 333 is an active-site residue. The interval 518-531 (AFVPLKSVAPTSPI) is required for PGA export across the outer membrane and catalytic activity.

This sequence belongs to the glycosyl hydrolase 28 family. In terms of assembly, monomer.

The protein localises to the secreted. The enzyme catalyses (1,4-alpha-D-galacturonosyl)n+m + H2O = (1,4-alpha-D-galacturonosyl)n + (1,4-alpha-D-galacturonosyl)m.. Functionally, contributes to the wilt disease production on tomato. This Ralstonia nicotianae (strain ATCC BAA-1114 / GMI1000) (Ralstonia solanacearum) protein is Polygalacturonase (pglA).